We begin with the raw amino-acid sequence, 479 residues long: Galactosylgalactosylxylosylprotein 3-beta-glucuronosyltransferase P (479 aa).

At 1–34 the chain is on the cytoplasmic side; it reads MKGGNYTSLGTCSGINVSGNVAGTRKMSLGKSIK. A helical; Signal-anchor for type II membrane protein membrane pass occupies residues 35-50; that stretch reads MYLTIFILTTCIYMAL. At 51–479 the chain is on the lumenal side; that stretch reads YQYHISREPF…EHIDRLLVRP (429 aa). Asn90, Asn97, Asn98, and Asn271 each carry an N-linked (GlcNAc...) asparagine glycan. Over residues 94–120 the composition is skewed to low complexity; sequence NTNNNSTTTSTTTTTAPTTPTTTTTTT. Residues 94 to 122 are disordered; the sequence is NTNNNSTTTSTTTTTAPTTPTTTTTTTVG. Asp335 provides a ligand contact to Mn(2+). The active-site Proton acceptor is the Glu418. Asn460 carries N-linked (GlcNAc...) asparagine glycosylation.

It belongs to the glycosyltransferase 43 family. Mn(2+) serves as cofactor.

The protein resides in the golgi apparatus membrane. It carries out the reaction 3-O-(beta-D-galactosyl-(1-&gt;3)-beta-D-galactosyl-(1-&gt;4)-beta-D-xylosyl)-L-seryl-[protein] + UDP-alpha-D-glucuronate = 3-O-(beta-D-GlcA-(1-&gt;3)-beta-D-Gal-(1-&gt;3)-beta-D-Gal-(1-&gt;4)-beta-D-Xyl)-L-seryl-[protein] + UDP + H(+). It functions in the pathway protein modification; protein glycosylation. Functionally, involved in the biosynthesis of L2/HNK-1 carbohydrate epitope on both glycolipids and glycoproteins. Enzyme has a broad specificity. This Drosophila melanogaster (Fruit fly) protein is Galactosylgalactosylxylosylprotein 3-beta-glucuronosyltransferase P (GlcAT-P).